The primary structure comprises 419 residues: Equilibrative nucleotide transporter 5 (419 aa).

11 consecutive transmembrane segments (helical) span residues 20–40 (MVVCCILGIGSLVSWNSLLSV), 56–76 (VLTFVYQPFSIGTIVIFAYNE), 86–106 (LIGYIVFTTSIFLLIILDLAT), 108–128 (GHGGIGPYIVLCAIVGSFGFA), 142–162 (LMCPELIQSFVAGLAVAGALT), 186–206 (IFLAISTLVEFLCVLLYAYVF), 265–285 (YVVNLFLIYVLTLSILPGFLY), 292–312 (GLGSWYALVLIAMYNWWDLVG), 327–347 (KGLTVAVLTRFLLVPAFYFTA), 354–374 (WMILLVSILGLTNGHLTVCIL), and 393–413 (LVLFILWGAFVGCALGWLWLI).

Belongs to the SLC29A/ENT transporter (TC 2.A.57) family.

The protein resides in the cell membrane. Functionally, may be involved in nucleoside transport. In Arabidopsis thaliana (Mouse-ear cress), this protein is Equilibrative nucleotide transporter 5 (ENT5).